The sequence spans 101 residues: NAD(P)H-quinone oxidoreductase subunit 4L, chloroplastic (101 aa).

The next 3 membrane-spanning stretches (helical) occupy residues 2 to 22 (MLEY…YGLI), 32 to 52 (MCLE…SDLF), and 61 to 81 (IFSI…PAIV).

Belongs to the complex I subunit 4L family. As to quaternary structure, NDH is composed of at least 16 different subunits, 5 of which are encoded in the nucleus.

It is found in the plastid. It localises to the chloroplast thylakoid membrane. The catalysed reaction is a plastoquinone + NADH + (n+1) H(+)(in) = a plastoquinol + NAD(+) + n H(+)(out). The enzyme catalyses a plastoquinone + NADPH + (n+1) H(+)(in) = a plastoquinol + NADP(+) + n H(+)(out). Its function is as follows. NDH shuttles electrons from NAD(P)H:plastoquinone, via FMN and iron-sulfur (Fe-S) centers, to quinones in the photosynthetic chain and possibly in a chloroplast respiratory chain. The immediate electron acceptor for the enzyme in this species is believed to be plastoquinone. Couples the redox reaction to proton translocation, and thus conserves the redox energy in a proton gradient. This chain is NAD(P)H-quinone oxidoreductase subunit 4L, chloroplastic, found in Acorus calamus var. americanus (American sweet flag).